Here is a 328-residue protein sequence, read N- to C-terminus: GMP reductase (328 aa).

The active-site Thioimidate intermediate is the Cys-176. Residue 205–228 (IIADGGIRTHGDIAKSVRFGATMV) coordinates NADP(+).

It belongs to the IMPDH/GMPR family. GuaC type 2 subfamily.

It catalyses the reaction IMP + NH4(+) + NADP(+) = GMP + NADPH + 2 H(+). Functionally, catalyzes the irreversible NADPH-dependent deamination of GMP to IMP. It functions in the conversion of nucleobase, nucleoside and nucleotide derivatives of G to A nucleotides, and in maintaining the intracellular balance of A and G nucleotides. The sequence is that of GMP reductase from Shouchella clausii (strain KSM-K16) (Alkalihalobacillus clausii).